The sequence spans 336 residues: Holliday junction branch migration complex subunit RuvB (336 aa).

The large ATPase domain (RuvB-L) stretch occupies residues 1–182; the sequence is MAKRMITTEL…FGVVHRLEFY (182 aa). ATP contacts are provided by residues Leu21, Arg22, Gly63, Lys66, Thr67, Thr68, 129–131, Arg172, Tyr182, and Arg219; that span reads EDY. Thr67 provides a ligand contact to Mg(2+). The small ATPAse domain (RuvB-S) stretch occupies residues 183-253; the sequence is TTEELKEIIT…VARFALDILE (71 aa). Residues 256–336 are head domain (RuvB-H); the sequence is KLGLDHIDRQ…GLPYENKELS (81 aa). DNA contacts are provided by Arg311 and Arg316.

This sequence belongs to the RuvB family. As to quaternary structure, homohexamer. Forms an RuvA(8)-RuvB(12)-Holliday junction (HJ) complex. HJ DNA is sandwiched between 2 RuvA tetramers; dsDNA enters through RuvA and exits via RuvB. An RuvB hexamer assembles on each DNA strand where it exits the tetramer. Each RuvB hexamer is contacted by two RuvA subunits (via domain III) on 2 adjacent RuvB subunits; this complex drives branch migration. In the full resolvosome a probable DNA-RuvA(4)-RuvB(12)-RuvC(2) complex forms which resolves the HJ.

The protein localises to the cytoplasm. It catalyses the reaction ATP + H2O = ADP + phosphate + H(+). The RuvA-RuvB-RuvC complex processes Holliday junction (HJ) DNA during genetic recombination and DNA repair, while the RuvA-RuvB complex plays an important role in the rescue of blocked DNA replication forks via replication fork reversal (RFR). RuvA specifically binds to HJ cruciform DNA, conferring on it an open structure. The RuvB hexamer acts as an ATP-dependent pump, pulling dsDNA into and through the RuvAB complex. RuvB forms 2 homohexamers on either side of HJ DNA bound by 1 or 2 RuvA tetramers; 4 subunits per hexamer contact DNA at a time. Coordinated motions by a converter formed by DNA-disengaged RuvB subunits stimulates ATP hydrolysis and nucleotide exchange. Immobilization of the converter enables RuvB to convert the ATP-contained energy into a lever motion, pulling 2 nucleotides of DNA out of the RuvA tetramer per ATP hydrolyzed, thus driving DNA branch migration. The RuvB motors rotate together with the DNA substrate, which together with the progressing nucleotide cycle form the mechanistic basis for DNA recombination by continuous HJ branch migration. Branch migration allows RuvC to scan DNA until it finds its consensus sequence, where it cleaves and resolves cruciform DNA. In Lachnoclostridium phytofermentans (strain ATCC 700394 / DSM 18823 / ISDg) (Clostridium phytofermentans), this protein is Holliday junction branch migration complex subunit RuvB.